The sequence spans 218 residues: Sulfite reductase, assimilatory-type (218 aa).

4 residues coordinate [4Fe-4S] cluster: Cys91, Cys97, Cys131, and Cys135. Cys135 provides a ligand contact to siroheme.

Its function is as follows. This enzyme catalyzes the 6-electron reduction of sulfite to sulfide. This is one of several activities required for the biosynthesis of L-cysteine from sulfate. The polypeptide is Sulfite reductase, assimilatory-type (Nitratidesulfovibrio vulgaris (strain ATCC 29579 / DSM 644 / CCUG 34227 / NCIMB 8303 / VKM B-1760 / Hildenborough) (Desulfovibrio vulgaris)).